A 315-amino-acid polypeptide reads, in one-letter code: Eukaryotic translation initiation factor 2 subunit 1 (315 aa).

Residues 17–88 form the S1 motif domain; the sequence is EDVVMVNVRS…EKGYIDLSKR (72 aa). Serine 49 carries the phosphoserine; by HRI modification. Phosphoserine is present on serine 52. Lysine 141 bears the N6-acetyllysine mark. Phosphoserine is present on serine 158. Threonine 279 and threonine 281 each carry phosphothreonine. The segment at 293-315 is disordered; sequence LERENAEVDGDDDAEEMEAKAED. Positions 299-308 are enriched in acidic residues; the sequence is EVDGDDDAEE.

It belongs to the eIF-2-alpha family. In terms of assembly, eukaryotic translation initiation factor 2 eIF2 is a heterotrimeric complex composed of an alpha (EIF2S1), a beta (EIF2S2) and a gamma (EIF2S3) chain. eIF2 is member of the 43S pre-initiation complex (43S PIC). eIF2 forms a complex with at least CELF1/CUGBP1, CALR, CALR3, EIF2S1, EIF2S2, HSP90B1 and HSPA5. Interaction with METAP2 protects EIF2S1 from inhibitory phosphorylation. Interacts with ABCF1. Associates with ribosomes. Interacts with DDX3X in an RNA-independent manner. Phosphorylation at Ser-49 and Ser-52 stabilizes the eIF-2/GDP/eIF2B complex and prevents GDP/GTP exchange reaction, thus impairing the recycling of eIF-2 between successive rounds of initiation and leading to global inhibition of translation, while concomitantly initiating the preferential translation of integrated stress response (ISR)-specific mRNAs. Substrate for at least 4 kinases: EIF2AK1/HRI, EIF2AK2/PKR, EIF2AK3/PERK and EIF2AK4/GCN2. Phosphorylation on Ser-52 by the EIF2AK4/GCN2 protein kinase occurs in response to amino acid starvation and UV irradiation. Phosphorylation at Ser-52 by the EIF2AK3/PERK protein kinase occurs in response to the unfolded protein response. Phosphorylation at Ser-52 by EIF2AK1/HRI in response to mitochondrial damage promotes relocalization to the mitochondrial surface.

It is found in the cytoplasm. The protein localises to the stress granule. It localises to the cytosol. Its subcellular location is the mitochondrion. Activity is regulated by phosphorylation at Ser-49 and Ser-52, which stabilizes the eIF2/GDP/eIF2B complex and prevents the eIF2B-mediated exchange of GDP for GTP, thereby preventing the formation of the 43S pre-initiation complex (43S PIC). This results in the global attenuation of 5' cap-dependent protein synthesis and concomitant translation of ISR-specific mRNAs that contain a short upstream open reading frame (uORF) in their 5' UTR, such as ATF4, ATF5, DDIT3/CHOP and PPP1R15A/GADD34. In terms of biological role, member of the eIF2 complex that functions in the early steps of protein synthesis by forming a ternary complex with GTP and initiator tRNA. This complex binds to a 40S ribosomal subunit, followed by mRNA binding to form a 43S pre-initiation complex. Junction of the 60S ribosomal subunit to form the 80S initiation complex is preceded by hydrolysis of the GTP bound to eIF2 and release of an eIF2-GDP binary complex. In order for eIF2 to recycle and catalyze another round of initiation, the GDP bound to eIF2 must exchange with GTP by way of a reaction catalyzed by eIF2B. EIF2S1/eIF2-alpha is a key component of the integrated stress response (ISR), required for adaptation to various stress: phosphorylation by metabolic-stress sensing protein kinases (EIF2AK1/HRI, EIF2AK2/PKR, EIF2AK3/PERK and EIF2AK4/GCN2) in response to stress converts EIF2S1/eIF2-alpha in a global protein synthesis inhibitor, leading to a attenuation of cap-dependent translation, while concomitantly initiating the preferential translation of ISR-specific mRNAs, such as the transcriptional activators ATF4 and QRICH1, and hence allowing ATF4- and QRICH1-mediated reprogramming. EIF2S1/eIF2-alpha also acts as an activator of mitophagy in response to mitochondrial damage: phosphorylation by EIF2AK1/HRI promotes relocalization to the mitochondrial surface, thereby triggering PRKN-independent mitophagy. This is Eukaryotic translation initiation factor 2 subunit 1 (EIF2S1) from Pongo abelii (Sumatran orangutan).